The following is a 308-amino-acid chain: UDP-N-acetylenolpyruvoylglucosamine reductase 2 (308 aa).

The FAD-binding PCMH-type domain occupies 31–197 (RIGGPADYLV…AEVVMALRPA (167 aa)). The active site involves R176. The Proton donor role is filled by S226. Residue E296 is part of the active site.

The protein belongs to the MurB family. FAD serves as cofactor.

It localises to the cytoplasm. The enzyme catalyses UDP-N-acetyl-alpha-D-muramate + NADP(+) = UDP-N-acetyl-3-O-(1-carboxyvinyl)-alpha-D-glucosamine + NADPH + H(+). The protein operates within cell wall biogenesis; peptidoglycan biosynthesis. Functionally, cell wall formation. The polypeptide is UDP-N-acetylenolpyruvoylglucosamine reductase 2 (Symbiobacterium thermophilum (strain DSM 24528 / JCM 14929 / IAM 14863 / T)).